The following is a 406-amino-acid chain: S-adenosylmethionine synthase (406 aa).

His-17 serves as a coordination point for ATP. Mg(2+) is bound at residue Asp-19. Glu-45 serves as a coordination point for K(+). Residues Glu-58 and Gln-101 each coordinate L-methionine. Residues Gln-101–Arg-111 form a flexible loop region. ATP is bound by residues Asp-178–Lys-180, Asp-258, Arg-264–Lys-265, Ala-281, and Lys-285. Asp-258 is a binding site for L-methionine. Lys-289 is an L-methionine binding site.

This sequence belongs to the AdoMet synthase family. Homotetramer; dimer of dimers. Requires Mg(2+) as cofactor. K(+) is required as a cofactor.

The protein resides in the cytoplasm. The catalysed reaction is L-methionine + ATP + H2O = S-adenosyl-L-methionine + phosphate + diphosphate. The protein operates within amino-acid biosynthesis; S-adenosyl-L-methionine biosynthesis; S-adenosyl-L-methionine from L-methionine: step 1/1. In terms of biological role, catalyzes the formation of S-adenosylmethionine (AdoMet) from methionine and ATP. The overall synthetic reaction is composed of two sequential steps, AdoMet formation and the subsequent tripolyphosphate hydrolysis which occurs prior to release of AdoMet from the enzyme. This Bifidobacterium longum (strain NCC 2705) protein is S-adenosylmethionine synthase.